Reading from the N-terminus, the 350-residue chain is Holliday junction branch migration complex subunit RuvB (350 aa).

The segment at 1–183 is large ATPase domain (RuvB-L); that stretch reads MSAERLVNPH…FVAVHRLVFY (183 aa). ATP contacts are provided by residues Leu22, Arg23, Gly64, Lys67, Thr68, Ser69, 130–132, Arg173, Tyr183, and Arg220; that span reads EDF. Thr68 provides a ligand contact to Mg(2+). The interval 184-254 is small ATPAse domain (RuvB-S); the sequence is SDAAMTEIVS…VAREALAQLE (71 aa). Residues 257–350 form a head domain (RuvB-H) region; that stretch reads ELGLDENDRR…ESGPQQGTLF (94 aa). Residues Arg312 and Arg317 each contribute to the DNA site.

Belongs to the RuvB family. Homohexamer. Forms an RuvA(8)-RuvB(12)-Holliday junction (HJ) complex. HJ DNA is sandwiched between 2 RuvA tetramers; dsDNA enters through RuvA and exits via RuvB. An RuvB hexamer assembles on each DNA strand where it exits the tetramer. Each RuvB hexamer is contacted by two RuvA subunits (via domain III) on 2 adjacent RuvB subunits; this complex drives branch migration. In the full resolvosome a probable DNA-RuvA(4)-RuvB(12)-RuvC(2) complex forms which resolves the HJ.

Its subcellular location is the cytoplasm. The enzyme catalyses ATP + H2O = ADP + phosphate + H(+). Its function is as follows. The RuvA-RuvB-RuvC complex processes Holliday junction (HJ) DNA during genetic recombination and DNA repair, while the RuvA-RuvB complex plays an important role in the rescue of blocked DNA replication forks via replication fork reversal (RFR). RuvA specifically binds to HJ cruciform DNA, conferring on it an open structure. The RuvB hexamer acts as an ATP-dependent pump, pulling dsDNA into and through the RuvAB complex. RuvB forms 2 homohexamers on either side of HJ DNA bound by 1 or 2 RuvA tetramers; 4 subunits per hexamer contact DNA at a time. Coordinated motions by a converter formed by DNA-disengaged RuvB subunits stimulates ATP hydrolysis and nucleotide exchange. Immobilization of the converter enables RuvB to convert the ATP-contained energy into a lever motion, pulling 2 nucleotides of DNA out of the RuvA tetramer per ATP hydrolyzed, thus driving DNA branch migration. The RuvB motors rotate together with the DNA substrate, which together with the progressing nucleotide cycle form the mechanistic basis for DNA recombination by continuous HJ branch migration. Branch migration allows RuvC to scan DNA until it finds its consensus sequence, where it cleaves and resolves cruciform DNA. In Chloroflexus aggregans (strain MD-66 / DSM 9485), this protein is Holliday junction branch migration complex subunit RuvB.